We begin with the raw amino-acid sequence, 376 residues long: 23S rRNA (uracil(747)-C(5))-methyltransferase RlmC (376 aa).

Positions 3, 11, 14, and 88 each coordinate [4Fe-4S] cluster. S-adenosyl-L-methionine is bound by residues Gln-213, Phe-242, Glu-263, and Asn-308. Catalysis depends on Cys-335, which acts as the Nucleophile.

It belongs to the class I-like SAM-binding methyltransferase superfamily. RNA M5U methyltransferase family. RlmC subfamily.

The catalysed reaction is uridine(747) in 23S rRNA + S-adenosyl-L-methionine = 5-methyluridine(747) in 23S rRNA + S-adenosyl-L-homocysteine + H(+). In terms of biological role, catalyzes the formation of 5-methyl-uridine at position 747 (m5U747) in 23S rRNA. In Vibrio vulnificus (strain CMCP6), this protein is 23S rRNA (uracil(747)-C(5))-methyltransferase RlmC.